The primary structure comprises 353 residues: Nicotinate-nucleotide--dimethylbenzimidazole phosphoribosyltransferase (353 aa).

Residue E320 is the Proton acceptor of the active site.

This sequence belongs to the CobT family.

The catalysed reaction is 5,6-dimethylbenzimidazole + nicotinate beta-D-ribonucleotide = alpha-ribazole 5'-phosphate + nicotinate + H(+). It participates in nucleoside biosynthesis; alpha-ribazole biosynthesis; alpha-ribazole from 5,6-dimethylbenzimidazole: step 1/2. In terms of biological role, catalyzes the synthesis of alpha-ribazole-5'-phosphate from nicotinate mononucleotide (NAMN) and 5,6-dimethylbenzimidazole (DMB). The chain is Nicotinate-nucleotide--dimethylbenzimidazole phosphoribosyltransferase from Pseudoalteromonas translucida (strain TAC 125).